Reading from the N-terminus, the 441-residue chain is Acetyltransferase TRI7 (441 aa).

A run of 7 helical transmembrane segments spans residues Gly-14–Ile-34, Ser-75–Thr-95, Ile-158–Ile-178, Ile-306–Gly-326, Leu-336–Cys-356, Leu-377–His-397, and Thr-421–Val-441.

It belongs to the wax synthase family.

It is found in the membrane. Its pathway is sesquiterpene biosynthesis; trichothecene biosynthesis. Functionally, acetyltransferase; part of the core gene cluster that mediates the biosynthesis of trichothecenes, a very large family of chemically related bicyclic sesquiterpene compounds acting as mycotoxins, including T2-toxin. The biosynthesis of trichothecenes begins with the cyclization of farnesyl diphosphate to trichodiene and is catalyzed by the trichodiene synthase TRI5. Trichodiene undergoes a series of oxygenations catalyzed by the cytochrome P450 monooxygenase TRI4. TRI4 controls the addition of four oxygens at C-2, C-3, C-11, and the C-12, C-13-epoxide to form the intermediate isotrichotriol. Isotrichotriol then undergoes a non-enzymatic isomerization and cyclization to form isotrichodermol. During this process, the oxygen at the C-2 position becomes the pyran ring oxygen and the hydroxyl group at C-11 is lost. More complex type A trichothecenes are built by modifying isotrichodermol through a series of paired hydroxylation and acetylation or acylation steps. Isotrichodermol is converted to isotrichodermin by the acetyltransferase TRI101. TRI101 encodes a C-3 transacetylase that acts as a self-protection or resistance factor during biosynthesis and that the presence of a free C-3 hydroxyl group is a key component of Fusarium trichothecene phytotoxicity. A second hydroxyl group is added to C-15 by the trichothecene C-15 hydroxylase TRI11, producing 15-decalonectrin, which is then acetylated by TRI3, producing calonectrin. A third hydroxyl group is added at C-4 by the cytochrome P450 monooxygenase TRI13, converting calonectrin to 3,15-diacetoxyspirpenol, which is subsequently acetylated by the acetyltransferase TRI7. A fourth hydroxyl group is added to C-8 by the cytochrome P450 monooxygenase TRI1, followed by the addition of an isovaleryl moiety by TRI16. Finally, the acetyl group is removed from the C-3 position by the trichothecene C-3 esterase TRI8 to produce T-2 toxin. This chain is Acetyltransferase TRI7, found in Fusarium sporotrichioides.